Reading from the N-terminus, the 387-residue chain is Dual specificity protein phosphatase MPK-4 (387 aa).

The segment covering 1–15 (MEQSQSQRQAWPSSS) has biased composition (polar residues). Positions 1 to 27 (MEQSQSQRQAWPSSSAGGGKAQDSGVL) are disordered. Residues 35–182 (GPVSIDEVDT…LKLFRRMGCK (148 aa)) enclose the Tyrosine-protein phosphatase domain. Cys-126 serves as the catalytic Phosphocysteine intermediate. Residues 248 to 267 (LEHKPRDRPPQEVVPKEKEE) are disordered.

This sequence belongs to the protein-tyrosine phosphatase family. Non-receptor class dual specificity subfamily. In terms of assembly, interacts (via tyrosine-protein phosphatase domain) with bsk/JNK; the interaction dephosphorylates bsk.

The protein resides in the nucleus. It is found in the cytoplasm. The catalysed reaction is O-phospho-L-tyrosyl-[protein] + H2O = L-tyrosyl-[protein] + phosphate. It carries out the reaction O-phospho-L-seryl-[protein] + H2O = L-seryl-[protein] + phosphate. It catalyses the reaction O-phospho-L-threonyl-[protein] + H2O = L-threonyl-[protein] + phosphate. With respect to regulation, inhibited by the tyrosine phosphatase inhibitor sodium vanadate. Dual specificity phosphatase; can dephosphorylate both phosphotyrosine and phosphoserine or phosphothreonine residues. May suppress bsk/JNK activation during the immune response. This is Dual specificity protein phosphatase MPK-4 from Drosophila melanogaster (Fruit fly).